A 944-amino-acid polypeptide reads, in one-letter code: Trehalose monomycolate exporter MmpL3 (944 aa).

Residues 1 to 13 lie on the Cytoplasmic side of the membrane; the sequence is MFAWWGRTVYRYR. Residues 14-34 traverse the membrane as a helical segment; sequence FIVIGVMVALCLGGGVFGLSL. Residues 35–185 are Periplasmic-facing; that stretch reads GKHVTQSGFY…TIATDQRRME (151 aa). 40-44 provides a ligand contact to a 1,2-diacylglycero-3-phosphoethanolamine; it reads QSGFY. Residues 186–206 form a helical membrane-spanning segment; it reads VLALPLVAVVLFFVFGGVIAA. Residues 207-209 lie on the Cytoplasmic side of the membrane; that stretch reads GLP. The helical transmembrane segment at 210 to 230 threads the bilayer; it reads VMVGGLCIAGALGIMRFLAIF. Over 231–235 the chain is Periplasmic; it reads GPVHY. A helical transmembrane segment spans residues 236–256; that stretch reads FAQPVVSLIGLGIAIDYGLFI. Over 257–286 the chain is Cytoplasmic; sequence VSRFREEIAEGYDTETAVRRTVITAGRTVT. A helical membrane pass occupies residues 287–307; that stretch reads FSAVLIVASAIGLLLFPQGFL. Over 308 to 314 the chain is Periplasmic; it reads KSLTYAT. Residues 315–335 traverse the membrane as a helical segment; it reads IASVMLSAILSITVLPACLGI. The Cytoplasmic portion of the chain corresponds to 336 to 396; sequence LGKHVDALGV…KLVNRVMKRP (61 aa). The chain crosses the membrane as a helical span at residues 397–417; the sequence is VLFAAPIVIIMILLIIPVGKL. Residues 418–562 are Periplasmic-facing; it reads SLGGISEKYL…HGLFAKMPLM (145 aa). The helical transmembrane segment at 563–583 threads the bilayer; it reads VVILLTTTIVLMFLAFGSVVL. Residues 584-586 are Cytoplasmic-facing; that stretch reads PIK. The chain crosses the membrane as a helical span at residues 587–607; the sequence is ATLMSALTLGSTMGILTWIFV. Residues 608-616 are Periplasmic-facing; that stretch reads DGHFSKWLN. A helical membrane pass occupies residues 617–637; that stretch reads FTPTPLTAPVIGLIIALVFGL. At 638-672 the chain is on the cytoplasmic side; the sequence is STDYEVFLVSRMVEARERGMSTQEAIRIGTAATGR. The chain crosses the membrane as a helical span at residues 673-693; sequence IITAAALIVAVVAGAFVFSDL. Residues 694-698 lie on the Periplasmic side of the membrane; sequence VMMKY. Residues 699–719 form a helical membrane-spanning segment; it reads LAFGLMAALLLDATVVRMFLV. Topologically, residues 720 to 944 are cytoplasmic; it reads PSVMKLLGDD…QDLLRREGRL (225 aa). The segment at 778–944 is disordered; the sequence is AAGDPRPPHD…QDLLRREGRL (167 aa). Low complexity predominate over residues 791–828; the sequence is PLAESPRPARSSPASSPELTPALEATAAPAAPSGASTT. Residues 829–839 show a composition bias toward polar residues; sequence RMQIGSSTEPP. Over residues 855-866 the composition is skewed to pro residues; that stretch reads STPPPTPTPPSA.

The protein belongs to the resistance-nodulation-cell division (RND) (TC 2.A.6) family. MmpL subfamily. Monomer. Interacts with TtfA (via N-terminus); active trehalose monomycolate (TMM) biosynthesis is not required for the complex formation.

Its subcellular location is the cell inner membrane. The protein resides in the cell septum. The protein localises to the cell tip. Inhibited by the antitubercular drug SQ109. Also inhibited by several other compounds such as the pyrrole derivative BM212, the adamantyl urea derivative AU1235, the benzimidazole C215, indoleamides, tetrahydropyrazolo[1,5-a]pyrimidine-3-carboxamide (THPP) and N-benzyl-6',7'-dihydrospiro[piperidine-4,4'-thieno[3,2-c]pyran] (Spiro) analogs. Inhibitory effects of these compounds, including SQ109, are most likely due to their ability to dissipate the transmembrane electrochemical proton gradient. Transports trehalose monomycolate (TMM) to the cell wall. Flips TMM across the inner membrane. Membrane potential is not required for this function. Transports probably phosphatidylethanolamine (PE) as well. Binds specifically both TMM and PE, but not trehalose dimycolate (TDM). Also binds diacylglycerol (DAG) and other phospholipids, including phosphatidylglycerol (PG), phosphatidylinositol (PI), and cardiolipin (CDL). Contributes to membrane potential, cell wall composition, antibiotic susceptibility and fitness. Could also be part of a heme-iron acquisition system. Functionally, is the target of the antitubercular drug SQ109. This chain is Trehalose monomycolate exporter MmpL3 (mmpL3), found in Mycobacterium tuberculosis (strain ATCC 25618 / H37Rv).